We begin with the raw amino-acid sequence, 348 residues long: ECA polysaccharide chain length modulation protein (348 aa).

The Cytoplasmic segment spans residues 1–30 (MTQPMPGKPAEDAENELDIRGLFRTLWAGK). A helical membrane pass occupies residues 31–51 (LWIIGMGLAFALIALAYTFFA). At 52-322 (RQEWSSTAIT…EPVKRDSPRR (271 aa)) the chain is on the periplasmic side. The chain crosses the membrane as a helical span at residues 323–343 (AFLMIMWGIVGGLIGAGVALT). Residues 344-348 (RRCSK) are Cytoplasmic-facing.

The protein belongs to the WzzB/Cld/Rol family. In terms of assembly, homooctamer. Probably part of a complex composed of WzxE, WzyE and WzzE.

The protein resides in the cell inner membrane. It participates in bacterial outer membrane biogenesis; enterobacterial common antigen biosynthesis. Its function is as follows. Modulates the polysaccharide chain length of enterobacterial common antigen (ECA). The protein is ECA polysaccharide chain length modulation protein of Escherichia coli O157:H7.